Here is a 411-residue protein sequence, read N- to C-terminus: Putative competence-damage inducible protein (411 aa).

The protein belongs to the CinA family.

This is Putative competence-damage inducible protein from Desulforamulus reducens (strain ATCC BAA-1160 / DSM 100696 / MI-1) (Desulfotomaculum reducens).